The following is a 414-amino-acid chain: Dual-specificity RNA methyltransferase RlmN (414 aa).

Catalysis depends on Glu-127, which acts as the Proton acceptor. A Radical SAM core domain is found at 133 to 380 (GEGRGTLCVS…SPIRMPRGRD (248 aa)). An intrachain disulfide couples Cys-140 to Cys-385. [4Fe-4S] cluster is bound by residues Cys-147, Cys-151, and Cys-154. S-adenosyl-L-methionine is bound by residues 211–212 (GE), Ser-243, 265–267 (SLH), and Asn-342. Cys-385 (S-methylcysteine intermediate) is an active-site residue.

The protein belongs to the radical SAM superfamily. RlmN family. The cofactor is [4Fe-4S] cluster.

Its subcellular location is the cytoplasm. It catalyses the reaction adenosine(2503) in 23S rRNA + 2 reduced [2Fe-2S]-[ferredoxin] + 2 S-adenosyl-L-methionine = 2-methyladenosine(2503) in 23S rRNA + 5'-deoxyadenosine + L-methionine + 2 oxidized [2Fe-2S]-[ferredoxin] + S-adenosyl-L-homocysteine. It carries out the reaction adenosine(37) in tRNA + 2 reduced [2Fe-2S]-[ferredoxin] + 2 S-adenosyl-L-methionine = 2-methyladenosine(37) in tRNA + 5'-deoxyadenosine + L-methionine + 2 oxidized [2Fe-2S]-[ferredoxin] + S-adenosyl-L-homocysteine. Its function is as follows. Specifically methylates position 2 of adenine 2503 in 23S rRNA and position 2 of adenine 37 in tRNAs. m2A2503 modification seems to play a crucial role in the proofreading step occurring at the peptidyl transferase center and thus would serve to optimize ribosomal fidelity. The chain is Dual-specificity RNA methyltransferase RlmN from Bartonella bacilliformis (strain ATCC 35685 / KC583 / Herrer 020/F12,63).